The primary structure comprises 326 residues: Protein FAM50 homolog (326 aa).

The interval 76 to 112 (EISNRDLQVARGASSSTSLAKDSQEAREKEEHVAKHT) is disordered. Residues 97–109 (DSQEAREKEEHVA) show a composition bias toward basic and acidic residues.

The protein belongs to the FAM50 family.

This is Protein FAM50 homolog from Caenorhabditis briggsae.